The primary structure comprises 473 residues: Ornithine decarboxylase (473 aa).

Residue Lys106 is modified to N6-(pyridoxal phosphate)lysine. Residues Ser240, Gly277, and 313 to 316 contribute to the pyridoxal 5'-phosphate site; that span reads EPGR. Residue 367–368 coordinates substrate; sequence FD. Cys417 functions as the Proton donor; shared with dimeric partner in the catalytic mechanism. A substrate-binding site is contributed by Asp418. Residue Tyr447 coordinates pyridoxal 5'-phosphate.

This sequence belongs to the Orn/Lys/Arg decarboxylase class-II family. In terms of assembly, homodimer. Only the dimer is catalytically active, as the active sites are constructed of residues from both monomers. It depends on pyridoxal 5'-phosphate as a cofactor.

The protein localises to the cytoplasm. It catalyses the reaction L-ornithine + H(+) = putrescine + CO2. It participates in amine and polyamine biosynthesis; putrescine biosynthesis via L-ornithine pathway; putrescine from L-ornithine: step 1/1. Inhibited by antizyme (AZ) OAZ1 in response to polyamine levels. AZ inhibits the assembly of the functional homodimer by binding to ODC monomers and targeting them for ubiquitin-independent proteolytic destruction by the 26S proteasome. Functionally, catalyzes the first and rate-limiting step of polyamine biosynthesis that converts ornithine into putrescine, which is the precursor for the polyamines, spermidine and spermine. Polyamines are essential for cell proliferation and are implicated in cellular processes, ranging from DNA replication to apoptosis. The sequence is that of Ornithine decarboxylase (SPE1) from Candida albicans (strain SC5314 / ATCC MYA-2876) (Yeast).